The following is a 103-amino-acid chain: Large ribosomal subunit protein bL21 (103 aa).

Belongs to the bacterial ribosomal protein bL21 family. In terms of assembly, part of the 50S ribosomal subunit. Contacts protein L20.

Functionally, this protein binds to 23S rRNA in the presence of protein L20. The polypeptide is Large ribosomal subunit protein bL21 (Sodalis glossinidius (strain morsitans)).